The following is a 61-amino-acid chain: Probable tautomerase LMOf2365_2536 (61 aa).

The Proton acceptor; via imino nitrogen role is filled by proline 2.

Belongs to the 4-oxalocrotonate tautomerase family.

The protein is Probable tautomerase LMOf2365_2536 of Listeria monocytogenes serotype 4b (strain F2365).